The following is a 188-amino-acid chain: Large ribosomal subunit protein bL9 (188 aa).

Residues 149–170 are compositionally biased toward basic and acidic residues; that stretch reads RSEEEAERQARGEEIGVEKEEP. Residues 149-188 form a disordered region; it reads RSEEEAERQARGEEIGVEKEEPSGFVEEALEETVEAPAEA.

This sequence belongs to the bacterial ribosomal protein bL9 family.

Functionally, binds to the 23S rRNA. The sequence is that of Large ribosomal subunit protein bL9 from Gluconacetobacter diazotrophicus (strain ATCC 49037 / DSM 5601 / CCUG 37298 / CIP 103539 / LMG 7603 / PAl5).